Reading from the N-terminus, the 68-residue chain is Alpha-conotoxin-like Lt1.2 (68 aa).

The signal sequence occupies residues 1 to 21; the sequence is MGMRMMFIMFMLVVLATTVDT. The propeptide occupies 22 to 48; the sequence is FTSDRALDAMNAAASNKASRLIALAVR. 2 cysteine pairs are disulfide-bonded: cysteine 50-cysteine 56 and cysteine 51-cysteine 64. A lacks the Ser-Xaa-Pro motif that is crucial for potent interaction with nAChR region spans residues 52 to 54; the sequence is ARA. At glycine 65 the chain carries Glycine amide.

This sequence belongs to the conotoxin A superfamily. As to expression, expressed by the venom duct.

Its subcellular location is the secreted. Functionally, alpha-conotoxins act on postsynaptic membranes, they bind to the nicotinic acetylcholine receptors (nAChR) and thus inhibit them. Has a distinct nAChR binding mode from other alpha-conotoxins, due to a different three residue motif (Ala-Xaa-Ala instead of the conserved Ser-Xaa-Pro motif). The chain is Alpha-conotoxin-like Lt1.2 from Conus litteratus (Lettered cone).